The sequence spans 358 residues: Methylthioribose-1-phosphate isomerase (358 aa).

N-acetylmethionine is present on methionine 1. Aspartate 248 acts as the Proton donor in catalysis.

It belongs to the eIF-2B alpha/beta/delta subunits family. MtnA subfamily.

It is found in the cytoplasm. The protein resides in the nucleus. The enzyme catalyses 5-(methylsulfanyl)-alpha-D-ribose 1-phosphate = 5-(methylsulfanyl)-D-ribulose 1-phosphate. Its pathway is amino-acid biosynthesis; L-methionine biosynthesis via salvage pathway; L-methionine from S-methyl-5-thio-alpha-D-ribose 1-phosphate: step 1/6. In terms of biological role, catalyzes the interconversion of methylthioribose-1-phosphate (MTR-1-P) into methylthioribulose-1-phosphate (MTRu-1-P). The sequence is that of Methylthioribose-1-phosphate isomerase from Bos taurus (Bovine).